We begin with the raw amino-acid sequence, 199 residues long: Photosystem I reaction center subunit XI (199 aa).

Helical transmembrane passes span 108–128 (LTAG…LLVL) and 165–185 (FWLG…TLHL).

This sequence belongs to the PsaL family.

It localises to the cellular thylakoid membrane. The sequence is that of Photosystem I reaction center subunit XI from Prochlorococcus marinus (strain AS9601).